Here is a 226-residue protein sequence, read N- to C-terminus: Uracil-DNA glycosylase (226 aa).

Aspartate 64 serves as the catalytic Proton acceptor.

This sequence belongs to the uracil-DNA glycosylase (UDG) superfamily. UNG family.

The protein localises to the cytoplasm. It catalyses the reaction Hydrolyzes single-stranded DNA or mismatched double-stranded DNA and polynucleotides, releasing free uracil.. Excises uracil residues from the DNA which can arise as a result of misincorporation of dUMP residues by DNA polymerase or due to deamination of cytosine. This is Uracil-DNA glycosylase from Vibrio vulnificus (strain CMCP6).